Reading from the N-terminus, the 311-residue chain is tRNA dimethylallyltransferase (311 aa).

An ATP-binding site is contributed by 10 to 17 (GPTAVGKT). 12–17 (TAVGKT) contributes to the substrate binding site. An interaction with substrate tRNA region spans residues 35–38 (DSMQ).

This sequence belongs to the IPP transferase family. Monomer. Mg(2+) serves as cofactor.

The catalysed reaction is adenosine(37) in tRNA + dimethylallyl diphosphate = N(6)-dimethylallyladenosine(37) in tRNA + diphosphate. Its function is as follows. Catalyzes the transfer of a dimethylallyl group onto the adenine at position 37 in tRNAs that read codons beginning with uridine, leading to the formation of N6-(dimethylallyl)adenosine (i(6)A). The sequence is that of tRNA dimethylallyltransferase from Anoxybacillus flavithermus (strain DSM 21510 / WK1).